Consider the following 1025-residue polypeptide: Multidrug resistance protein MdtC (1025 aa).

Topologically, residues 1 to 6 (MKFFAL) are cytoplasmic. Residues 7–29 (FIYRPVATILLSVAITLCGILGF) traverse the membrane as a helical segment. Residues 30 to 335 (RMLPVAPLPQ…TIRASLEEVE (306 aa)) lie on the Periplasmic side of the membrane. The chain crosses the membrane as a helical span at residues 336 to 353 (QTLIISVALVILVVFLFL). The Cytoplasmic portion of the chain corresponds to 354-359 (RSGRAT). A helical membrane pass occupies residues 360-379 (IIPAVAVPVSLIGTFAAMYL). The Periplasmic portion of the chain corresponds to 380–388 (CGFSLNNLS). A helical membrane pass occupies residues 389 to 411 (LMALTIATGFVVDDAIVVLENIA). Residues 412 to 430 (RHLEAGMKPLQAALQGTRE) are Cytoplasmic-facing. A helical membrane pass occupies residues 431–453 (VGFTVLSMSLSLVAVFLPLLLMG). The Periplasmic portion of the chain corresponds to 454–467 (GLPGRLLREFAVTL). The chain crosses the membrane as a helical span at residues 468-490 (SVAIGISLLVSLTLTPMMCGWML). At 491–852 (KASKPREQKR…QVFQETMNSQ (362 aa)) the chain is on the cytoplasmic side. The helical transmembrane segment at 853–875 (VILIIAAIATVYIVLGILYESYV) threads the bilayer. The Periplasmic segment spans residues 876 to 894 (HPLTILSTLPSAGVGALLA). A helical transmembrane segment spans residues 895–917 (LELFNAPFSLIALIGIMLLIGIV). Over 918–947 (KKNAIMMVDFALEAQRHGNLTPQEAIFQAC) the chain is Cytoplasmic. The chain crosses the membrane as a helical span at residues 948–970 (LLRFRPIMMTTLAALFGALPLVL). At 971 to 984 (SGGDGSELRQPLGI) the chain is on the periplasmic side. A helical transmembrane segment spans residues 985 to 1007 (TIVGGLVMSQLLTLYTTPVVYLF). The Cytoplasmic segment spans residues 1008-1025 (FDRLRLRFSRKPKQAVTE).

The protein belongs to the resistance-nodulation-cell division (RND) (TC 2.A.6) family. MdtC subfamily. Part of a tripartite efflux system composed of MdtA, MdtB and MdtC. MdtC forms a heteromultimer with MdtB.

Its subcellular location is the cell inner membrane. Functionally, the MdtABC tripartite complex confers resistance against novobiocin and deoxycholate. In Escherichia coli O6:H1 (strain CFT073 / ATCC 700928 / UPEC), this protein is Multidrug resistance protein MdtC.